Consider the following 224-residue polypeptide: Inhibitor of apoptosis protein (224 aa).

Residues 29–92 form a BIR repeat; it reads VDARNQSFAI…GFWSRNCGFM (64 aa). Zn(2+)-binding residues include cysteine 62, cysteine 65, histidine 82, and cysteine 89. A C4-type zinc finger spans residues 189–207; the sequence is CMTCGIEPIKKDENFCNAC.

The protein belongs to the asfivirus IAP family. Interacts with subunit p17 of host CASP3.

Its subcellular location is the host cytoplasm. The protein resides in the virion. Functionally, prevent apoptosis of host cell by inhibiting caspase-3/CASP3 activation to promote the viral replication. Also induces the activation of host NF-kappaB. This Ornithodoros (relapsing fever ticks) protein is Inhibitor of apoptosis protein.